Consider the following 566-residue polypeptide: Pentatricopeptide repeat-containing protein At4g11690 (566 aa).

PPR repeat units follow at residues lysine 93 to proline 127, glycine 128 to lysine 158, aspartate 162 to proline 196, asparagine 197 to alanine 231, asparagine 232 to proline 266, asparagine 267 to cysteine 301, asparagine 302 to proline 336, asparagine 337 to proline 371, serine 372 to proline 406, serine 407 to proline 441, aspartate 442 to proline 476, asparagine 477 to proline 511, and asparagine 512 to proline 546.

Belongs to the PPR family. P subfamily.

This is Pentatricopeptide repeat-containing protein At4g11690 from Arabidopsis thaliana (Mouse-ear cress).